The chain runs to 303 residues: Protease HtpX homolog (303 aa).

2 consecutive transmembrane segments (helical) span residues V4–I24 and M38–L58. A Zn(2+)-binding site is contributed by H144. E145 is an active-site residue. H148 contacts Zn(2+). Transmembrane regions (helical) follow at residues G152 to S172 and I199 to F219. Residue E224 participates in Zn(2+) binding.

Belongs to the peptidase M48B family. Requires Zn(2+) as cofactor.

It localises to the cell inner membrane. The polypeptide is Protease HtpX homolog (Chlorobium phaeobacteroides (strain BS1)).